The sequence spans 262 residues: Type III pantothenate kinase (262 aa).

An ATP-binding site is contributed by 9–16; sequence DAGNSRIK. Substrate contacts are provided by residues tyrosine 96 and 103-106; that span reads GSDR. Aspartate 105 functions as the Proton acceptor in the catalytic mechanism. Threonine 129 is an ATP binding site. Threonine 189 is a binding site for substrate.

The protein belongs to the type III pantothenate kinase family. In terms of assembly, homodimer. NH4(+) is required as a cofactor. It depends on K(+) as a cofactor.

The protein resides in the cytoplasm. The catalysed reaction is (R)-pantothenate + ATP = (R)-4'-phosphopantothenate + ADP + H(+). Its pathway is cofactor biosynthesis; coenzyme A biosynthesis; CoA from (R)-pantothenate: step 1/5. In terms of biological role, catalyzes the phosphorylation of pantothenate (Pan), the first step in CoA biosynthesis. The polypeptide is Type III pantothenate kinase (Burkholderia multivorans (strain ATCC 17616 / 249)).